A 191-amino-acid polypeptide reads, in one-letter code: Ribosomal RNA small subunit methyltransferase G (191 aa).

S-adenosyl-L-methionine contacts are provided by residues G62, L67, 111–112, and R124; that span reads IE.

It belongs to the methyltransferase superfamily. RNA methyltransferase RsmG family.

Its subcellular location is the cytoplasm. The catalysed reaction is guanosine(527) in 16S rRNA + S-adenosyl-L-methionine = N(7)-methylguanosine(527) in 16S rRNA + S-adenosyl-L-homocysteine. Functionally, specifically methylates the N7 position of guanine in position 527 of 16S rRNA. This Rickettsia rickettsii (strain Sheila Smith) protein is Ribosomal RNA small subunit methyltransferase G.